A 419-amino-acid chain; its full sequence is MKKGNVIIKNASQVITCSGFEGKFGKDMNNINVIENASVVVEDGIIKEIGSLEDILKKYNEKHFEIVDASNKAVLPGFVDSHTHFVFGGFRAEEFSWRLNGESYMDIMNKGGGIVNSVRGTREATEDELYESAKKRLDSMIHFGVTTVEGKSGYGLDYETELKQLRVMDRLQKDHSIDICKTFMGAHATPEEYRGRNEEYINFIIEDVLPKVAEEKLAEFCDVFCEEGVFSVEESRKILLKAKELGMKIKLHADEIVQLGGAELAAELGATSADHLLHASDEGIKAMADKKVIATLLPTTAFCLKEPFARARMMIDKGGAVALGTDFNPGSGFTNSIPLMFALATIYMDMSIEEAISAMTINGAAAIGRAETIGSIDKGKKGDLVILEYPSYKFLPYNTGVNIVETVIKDGNIVYKKSY.

Residues histidine 82 and histidine 84 each contribute to the Fe(3+) site. Zn(2+) contacts are provided by histidine 82 and histidine 84. 4-imidazolone-5-propanoate is bound by residues arginine 91, tyrosine 154, and histidine 187. Tyrosine 154 provides a ligand contact to N-formimidoyl-L-glutamate. Residue histidine 252 participates in Fe(3+) binding. Histidine 252 lines the Zn(2+) pocket. Residue glutamate 255 participates in 4-imidazolone-5-propanoate binding. Fe(3+) is bound at residue aspartate 326. Aspartate 326 is a binding site for Zn(2+). 2 residues coordinate N-formimidoyl-L-glutamate: asparagine 328 and glycine 330. Serine 331 is a 4-imidazolone-5-propanoate binding site.

This sequence belongs to the metallo-dependent hydrolases superfamily. HutI family. Zn(2+) serves as cofactor. It depends on Fe(3+) as a cofactor.

It is found in the cytoplasm. The enzyme catalyses 4-imidazolone-5-propanoate + H2O = N-formimidoyl-L-glutamate. The protein operates within amino-acid degradation; L-histidine degradation into L-glutamate; N-formimidoyl-L-glutamate from L-histidine: step 3/3. In terms of biological role, catalyzes the hydrolytic cleavage of the carbon-nitrogen bond in imidazolone-5-propanoate to yield N-formimidoyl-L-glutamate. It is the third step in the universal histidine degradation pathway. This is Imidazolonepropionase from Clostridium tetani (strain Massachusetts / E88).